We begin with the raw amino-acid sequence, 166 residues long: NAD(P)H-quinone oxidoreductase subunit I, chloroplastic (166 aa).

4Fe-4S ferredoxin-type domains lie at 55-84 (GRIH…VDWK) and 95-124 (LNYS…MTEE). Cys-64, Cys-67, Cys-70, Cys-74, Cys-104, Cys-107, Cys-110, and Cys-114 together coordinate [4Fe-4S] cluster.

The protein belongs to the complex I 23 kDa subunit family. As to quaternary structure, NDH is composed of at least 16 different subunits, 5 of which are encoded in the nucleus. It depends on [4Fe-4S] cluster as a cofactor.

Its subcellular location is the plastid. It is found in the chloroplast thylakoid membrane. It carries out the reaction a plastoquinone + NADH + (n+1) H(+)(in) = a plastoquinol + NAD(+) + n H(+)(out). The catalysed reaction is a plastoquinone + NADPH + (n+1) H(+)(in) = a plastoquinol + NADP(+) + n H(+)(out). In terms of biological role, NDH shuttles electrons from NAD(P)H:plastoquinone, via FMN and iron-sulfur (Fe-S) centers, to quinones in the photosynthetic chain and possibly in a chloroplast respiratory chain. The immediate electron acceptor for the enzyme in this species is believed to be plastoquinone. Couples the redox reaction to proton translocation, and thus conserves the redox energy in a proton gradient. The chain is NAD(P)H-quinone oxidoreductase subunit I, chloroplastic from Rensonia salvadorica.